We begin with the raw amino-acid sequence, 643 residues long: Alpha-dioxygenase 1 (643 aa).

The active-site Proton acceptor is H167. Position 168 (D168) interacts with Ca(2+). H172 is a heme b binding site. Ca(2+)-binding residues include T220, W222, D224, and S226. H392, R489, and R493 together coordinate heme b.

The protein belongs to the peroxidase family. The cofactor is heme b. Ca(2+) is required as a cofactor.

In terms of biological role, alpha-dioxygenase that catalyzes the primary oxygenation step of a variety of 14-20 carbon fatty acids, containing up to three unsaturated bonds, into their corresponding 2R-hydroperoxides. Involved in the production of oxylipins that function in cell signaling, wound healing, and protection from infection. The lipid-derived signaling pathway is involved in the initial response of hot pepper plants to pathogen infection. This chain is Alpha-dioxygenase 1, found in Capsicum annuum (Capsicum pepper).